Consider the following 222-residue polypeptide: Putative N-acetylmannosamine-6-phosphate 2-epimerase (222 aa).

It belongs to the NanE family.

The catalysed reaction is an N-acyl-D-glucosamine 6-phosphate = an N-acyl-D-mannosamine 6-phosphate. Its pathway is amino-sugar metabolism; N-acetylneuraminate degradation; D-fructose 6-phosphate from N-acetylneuraminate: step 3/5. Converts N-acetylmannosamine-6-phosphate (ManNAc-6-P) to N-acetylglucosamine-6-phosphate (GlcNAc-6-P). This Staphylococcus aureus (strain USA300) protein is Putative N-acetylmannosamine-6-phosphate 2-epimerase.